The sequence spans 625 residues: RalA-binding protein 1 (625 aa).

Basic and acidic residues-rich tracts occupy residues 1–11 (MDFDSPEEKEF) and 20–60 (ADAK…KDRG). The segment at 1–172 (MDFDSPEEKE…SKQLSQQQDD (172 aa)) is disordered. Phosphoserine occurs at positions 68 and 69. Over residues 94-157 (KSKEKREKSR…EKDKKADKKD (64 aa)) the composition is skewed to basic and acidic residues. The 195-residue stretch at 191 to 385 (VSLATERSRC…PLTSTSPKLP (195 aa)) folds into the Rho-GAP domain. Residues 443 to 500 (QEKTAEEVDNSSSAPPAVASEDTTDSKPAGTPAVSTNNSISQEEPKTDTLTPKDAPND) form a disordered region. A compositionally biased stretch (polar residues) spans 475–484 (AVSTNNSISQ).

Interacts with CycB and numb.

Its function is as follows. Participates in receptor endocytosis during interphase, is also involved in mitotic processes when endocytosis is switched off. The chain is RalA-binding protein 1 from Drosophila melanogaster (Fruit fly).